The sequence spans 295 residues: Acetyl-coenzyme A carboxylase carboxyl transferase subunit beta (295 aa).

Positions 25-294 constitute a CoA carboxyltransferase N-terminal domain; the sequence is VWTKCTSCEQ…PFNAEELSDT (270 aa). Zn(2+) is bound by residues cysteine 29, cysteine 32, cysteine 48, and cysteine 51. A C4-type zinc finger spans residues 29-51; the sequence is CTSCEQVLYRDELKRHLEVCPKC.

The protein belongs to the AccD/PCCB family. Acetyl-CoA carboxylase is a heterohexamer composed of biotin carboxyl carrier protein (AccB), biotin carboxylase (AccC) and two subunits each of ACCase subunit alpha (AccA) and ACCase subunit beta (AccD). It depends on Zn(2+) as a cofactor.

It is found in the cytoplasm. The enzyme catalyses N(6)-carboxybiotinyl-L-lysyl-[protein] + acetyl-CoA = N(6)-biotinyl-L-lysyl-[protein] + malonyl-CoA. Its pathway is lipid metabolism; malonyl-CoA biosynthesis; malonyl-CoA from acetyl-CoA: step 1/1. Component of the acetyl coenzyme A carboxylase (ACC) complex. Biotin carboxylase (BC) catalyzes the carboxylation of biotin on its carrier protein (BCCP) and then the CO(2) group is transferred by the transcarboxylase to acetyl-CoA to form malonyl-CoA. This Mannheimia succiniciproducens (strain KCTC 0769BP / MBEL55E) protein is Acetyl-coenzyme A carboxylase carboxyl transferase subunit beta.